The primary structure comprises 293 residues: D-alanine--D-alanine ligase (293 aa).

The 194-residue stretch at 98–291 (KIIWKQHNLT…FNKLVVAIIN (194 aa)) folds into the ATP-grasp domain. 124–177 (DFPLPWMVKPTLEGSSIGISKVDSQIQLNNALMLAWQYNSHALIEQWIEGDEYT) serves as a coordination point for ATP. Residues D245, E258, and N260 each contribute to the Mg(2+) site.

It belongs to the D-alanine--D-alanine ligase family. Mg(2+) serves as cofactor. The cofactor is Mn(2+).

It localises to the cytoplasm. The enzyme catalyses 2 D-alanine + ATP = D-alanyl-D-alanine + ADP + phosphate + H(+). The protein operates within cell wall biogenesis; peptidoglycan biosynthesis. Its function is as follows. Cell wall formation. In Ruthia magnifica subsp. Calyptogena magnifica, this protein is D-alanine--D-alanine ligase.